The following is a 556-amino-acid chain: Zinc finger protein GLI1 (556 aa).

3 disordered regions span residues 57-83 (TEHPGGAADGSRFSTPRGAGKLGKKRA), 133-178 (SLGY…TPAR), and 200-222 (KYPEEKSEGDISSPASTGTQDPL). The segment covering 135–148 (GYQNPPGQQKGQGQ) has biased composition (low complexity). 5 C2H2-type zinc fingers span residues 247–272 (TNCYWDGCAKEFDTQEQLVHHINNEH), 280–307 (FVCHWAACSREQRPFKAQYMLVVHMRRH), 313–337 (HKCTFEGCNKAYSRLENLKTHLRSH), 343–368 (YVCEHEGCNKAFSNASDRAKHQNRTH), and 374–399 (YICKIPGCTKRYTDPSSLRKHVKTVH). The interval 295 to 303 (KAQYMLVVH) is interaction with DNA. Interaction with DNA stretches follow at residues 357 to 362 (ASDRAK) and 387 to 393 (DPSSLRK). The tract at residues 387-492 (DPSSLRKHVK…VEMTGNTGGS (106 aa)) is disordered. Residues 454 to 472 (SKPQPSPGGQSSCSSDRSP) show a composition bias toward low complexity.

The protein belongs to the GLI C2H2-type zinc-finger protein family.

The protein resides in the cytoplasm. It localises to the nucleus. In terms of biological role, acts as a transcriptional activator. Binds to the DNA consensus sequence 5'-GACCACCCA-3'. May regulate the transcription of specific genes during normal development. May play a role in craniofacial development and digital development, as well as development of the central nervous system and gastrointestinal tract. Mediates SHH signaling. Plays a role in cell proliferation and differentiation via its role in SHH signaling. The sequence is that of Zinc finger protein GLI1 (GLI1) from Gallus gallus (Chicken).